A 514-amino-acid polypeptide reads, in one-letter code: Ribonuclease Y (514 aa).

Residues 2–22 (EDLIVAIVVGAFSSAISIFVV) form a helical membrane-spanning segment. Residues 204–268 (LINNIPLNDE…VATKTIRELL (65 aa)) enclose the KH domain. An HD domain is found at 330–423 (ALAHTLEVAH…VCAADALSAA (94 aa)).

The protein belongs to the RNase Y family.

It localises to the cell membrane. Endoribonuclease that initiates mRNA decay. The protein is Ribonuclease Y of Aliarcobacter butzleri (strain RM4018) (Arcobacter butzleri).